We begin with the raw amino-acid sequence, 92 residues long: Small ribosomal subunit protein uS19 (92 aa).

This sequence belongs to the universal ribosomal protein uS19 family.

In terms of biological role, protein S19 forms a complex with S13 that binds strongly to the 16S ribosomal RNA. This chain is Small ribosomal subunit protein uS19, found in Paramagnetospirillum magneticum (strain ATCC 700264 / AMB-1) (Magnetospirillum magneticum).